We begin with the raw amino-acid sequence, 215 residues long: Glutathione S-transferase F9 (215 aa).

A GST N-terminal domain is found at 2 to 81 (VLKVYGPHFA…YVAEKYRSQG (80 aa)). 11 to 12 (AS) contacts glutathione. Ser12 carries the post-translational modification Phosphoserine. Methionine sulfoxide is present on Met35. Glutathione-binding positions include 39 to 40 (HK), 52 to 53 (TV), and 65 to 66 (ES). The region spanning 88–215 (TVEDRGQVEQ…ETVAKYSFPA (128 aa)) is the GST C-terminal domain. Methionine sulfoxide is present on residues Met118, Met123, and Met184.

Belongs to the GST superfamily. Phi family. In terms of processing, oxidated at Met-35, Met-118, Met-123 and Met-184 in oxidative stress conditions (e.g. hydrogen peroxide H(2)O(2)).

The protein resides in the cytoplasm. Its subcellular location is the cytosol. The catalysed reaction is RX + glutathione = an S-substituted glutathione + a halide anion + H(+). With respect to regulation, redox-regulated enzyme; in oxidative stress conditions methionine oxidation ensure a thermodynamic and structural compensatory mechanism to guarantee H(2)O(2) peroxidase activity despite transferase activity inhibition. Its function is as follows. In vitro, possesses glutathione S-transferase activity toward 1-chloro-2,4-dinitrobenzene (CDNB) and benzyl isothiocyanate (BITC), and glutathione peroxidase activity toward cumene hydroperoxide and linoleic acid-13-hydroperoxide. May be involved in the conjugation of reduced glutathione to a wide number of exogenous and endogenous hydrophobic electrophiles and have a detoxification role against certain herbicides. This chain is Glutathione S-transferase F9, found in Arabidopsis thaliana (Mouse-ear cress).